The primary structure comprises 255 residues: MVDPVAALCNYNVLEVIFSYLELDDLSHCSQVCKSWYHFLNDENSDVWRWHCLNKLPKESLKSDLLSSVSTYKTKLRAYFHAWSPNDCSRNVYIKPNGFTLHRNPVAQSTDAARGKIGFRHGRHTWEVIWEGPLGTVAVIGISTKEAALQCHGYVALLGSDDQSWGWNLVENHLLHNGDMQGSYPLLNNAPKYQVGERIRVILDCEDNTLSFEKNYEFLGVAFRGLPDKKLYPTVSAVYGNTEVSMVYLGTPLDG.

Residues 3–51 (DPVAALCNYNVLEVIFSYLELDDLSHCSQVCKSWYHFLNDENSDVWRWH) enclose the F-box domain. The B30.2/SPRY domain occupies 61–253 (LKSDLLSSVS…VSMVYLGTPL (193 aa)).

It belongs to the FBXO45/Fsn family. Component of an E3 ubiquitin ligase complex composed of hiw and Fsn.

The protein localises to the synapse. The protein operates within protein modification; protein ubiquitination. Functionally, required in the presynaptic motoneuron to down-regulate the levels of wnd and restrain synaptic terminal growth at the neuromuscular junction (NMJ). This Drosophila simulans (Fruit fly) protein is F-box/SPRY domain-containing protein 1.